Here is a 35-residue protein sequence, read N- to C-terminus: Photosystem II reaction center protein T (35 aa).

Residues 3–23 (ALVYTFLLVSTLGIIFFAIFF) traverse the membrane as a helical segment.

The protein belongs to the PsbT family. As to quaternary structure, PSII is composed of 1 copy each of membrane proteins PsbA, PsbB, PsbC, PsbD, PsbE, PsbF, PsbH, PsbI, PsbJ, PsbK, PsbL, PsbM, PsbT, PsbY, PsbZ, Psb30/Ycf12, at least 3 peripheral proteins of the oxygen-evolving complex and a large number of cofactors. It forms dimeric complexes.

It localises to the plastid. Its subcellular location is the chloroplast thylakoid membrane. Functionally, found at the monomer-monomer interface of the photosystem II (PS II) dimer, plays a role in assembly and dimerization of PSII. PSII is a light-driven water plastoquinone oxidoreductase, using light energy to abstract electrons from H(2)O, generating a proton gradient subsequently used for ATP formation. In Amborella trichopoda, this protein is Photosystem II reaction center protein T.